Consider the following 406-residue polypeptide: ATP synthase subunit a (406 aa).

Low complexity-rich tracts occupy residues 22 to 31 (AGEHGAPAPE) and 43 to 59 (DAAG…AEHG). A disordered region spans residues 22 to 76 (AGEHGAPAPEVATPAEGHGARDAAGAATDPHGAAAEHGAAAHEDPAQHGAAGAEA). 6 consecutive transmembrane segments (helical) span residues 151–171 (KHVV…FAAV), 209–229 (FVPY…FGLV), 232–252 (AATA…TFLI), 278–298 (LWPL…TKPF), 304–324 (LFAN…LIFA), and 351–371 (VQAY…VAHH). The disordered stretch occupies residues 375–406 (DEHEEHGHGAAATGGAHGSHGSHVAGASPGHG). A compositionally biased stretch (low complexity) spans 383 to 406 (GAAATGGAHGSHGSHVAGASPGHG).

The protein belongs to the ATPase A chain family. F-type ATPases have 2 components, CF(1) - the catalytic core - and CF(0) - the membrane proton channel. CF(1) has five subunits: alpha(3), beta(3), gamma(1), delta(1), epsilon(1). CF(0) has three main subunits: a(1), b(2) and c(9-12). The alpha and beta chains form an alternating ring which encloses part of the gamma chain. CF(1) is attached to CF(0) by a central stalk formed by the gamma and epsilon chains, while a peripheral stalk is formed by the delta and b chains.

Its subcellular location is the cell inner membrane. Its function is as follows. Key component of the proton channel; it plays a direct role in the translocation of protons across the membrane. This chain is ATP synthase subunit a, found in Anaeromyxobacter sp. (strain Fw109-5).